The chain runs to 687 residues: Homeobox-leucine zipper protein HDG12 (687 aa).

The interval 1-32 (MEFLGDSQNHDSSETEKKNKKKKRFHRHTPHQ) is disordered. Residues 8–17 (QNHDSSETEK) are compositionally biased toward basic and acidic residues. A compositionally biased stretch (basic residues) spans 18 to 30 (KNKKKKRFHRHTP). Residues 21-80 (KKKRFHRHTPHQIQRLESTFNECQHPDEKQRNQLSRELGLAPRQIKFWFQNRRTQKKAQH) constitute a DNA-binding region (homeobox). The stretch at 87-150 (ALKEENDKIR…LERVSSIAAK (64 aa)) forms a coiled coil. The region spanning 206-440 (SEMDKSLMTN…LQRMCERFTN (235 aa)) is the START domain.

It belongs to the HD-ZIP homeobox family. Class IV subfamily. In terms of assembly, interacts with BBM. Expressed in apical meristems and young epidermal tissue including trichomes and stipules. Expressed in lateral root tips, the L1 layer of apical inflorescence meristems and early flower primordia, carpel and stamen filament epidermis, stigma papillae, ovule primordia, nucellus and embryo.

The protein localises to the nucleus. Functionally, probable transcription factor that acts as a negative regulator of trichome branching in association with HDG11. Seems to promote cell differentiation. May regulate cell differentiation and proliferation during root and shoot meristem development. Acts as a positive regulator of SCL18/LAS expression. Involved, together with PDF2, in the regulation of flower organs development by promoting the expression of APETALA 3 (AP3) in the epidermis and internal cell layers of developing flowers. In Arabidopsis thaliana (Mouse-ear cress), this protein is Homeobox-leucine zipper protein HDG12.